The chain runs to 497 residues: Di-/tripeptide transporter (497 aa).

The Cytoplasmic segment spans residues M1–R36. Residues A37 to G55 form a helical membrane-spanning segment. At L56 to I64 the chain is on the extracellular side. The chain crosses the membrane as a helical span at residues V65 to A83. Topologically, residues D84–T92 are cytoplasmic. The chain crosses the membrane as a helical span at residues I93 to F111. Over G112 to S115 the chain is Extracellular. A helical transmembrane segment spans residues L116–I134. Topologically, residues S135 to N154 are cytoplasmic. Residues I155 to T173 traverse the membrane as a helical segment. Over V174–H181 the chain is Extracellular. A helical transmembrane segment spans residues L182 to Y200. At G201 to N224 the chain is on the cytoplasmic side. The helical transmembrane segment at F225 to L243 threads the bilayer. The Extracellular portion of the chain corresponds to Y244 to N254. The helical transmembrane segment at F255–M273 threads the bilayer. Topologically, residues M274–P293 are cytoplasmic. The helical transmembrane segment at L294–I312 threads the bilayer. The Extracellular segment spans residues A313–P335. A helical transmembrane segment spans residues S336 to V354. Residues R355–G372 lie on the Cytoplasmic side of the membrane. A helical membrane pass occupies residues L373–L391. Residues N392–S425 are Extracellular-facing. Residues T426–A444 traverse the membrane as a helical segment. Over D445 to R497 the chain is Cytoplasmic.

Belongs to the major facilitator superfamily. Proton-dependent oligopeptide transporter (POT/PTR) (TC 2.A.17) family.

Its subcellular location is the cell membrane. Proton-dependent uptake of di- or tri-peptides. This is Di-/tripeptide transporter (dtpT) from Lactococcus lactis subsp. lactis (strain IL1403) (Streptococcus lactis).